Reading from the N-terminus, the 252-residue chain is Mediator of RNA polymerase II transcription subunit 4 (252 aa).

Coiled coils occupy residues 5–31 and 70–112; these read KKST…ETLA and KTHQ…QAKE. The tract at residues 213-252 is disordered; that stretch reads MLPPNHSNEFLMESLGPNKENEEDVEVMSTDSSSSSSDSD. Residues 241 to 252 are compositionally biased toward low complexity; that stretch reads STDSSSSSSDSD.

The protein belongs to the Mediator complex subunit 4 family. In terms of assembly, component of the Mediator complex.

The protein resides in the nucleus. Component of the Mediator complex, a coactivator involved in the regulated transcription of nearly all RNA polymerase II-dependent genes. Mediator functions as a bridge to convey information from gene-specific regulatory proteins to the basal RNA polymerase II transcription machinery. Mediator is recruited to promoters by direct interactions with regulatory proteins and serves as a scaffold for the assembly of a functional preinitiation complex with RNA polymerase II and the general transcription factors. The polypeptide is Mediator of RNA polymerase II transcription subunit 4 (med4) (Xenopus laevis (African clawed frog)).